A 274-amino-acid chain; its full sequence is 4-diphosphocytidyl-2-C-methyl-D-erythritol kinase (274 aa).

K8 is an active-site residue. 94–104 (PSGAGLGGGSS) is a binding site for ATP. Residue D136 is part of the active site.

Belongs to the GHMP kinase family. IspE subfamily.

The catalysed reaction is 4-CDP-2-C-methyl-D-erythritol + ATP = 4-CDP-2-C-methyl-D-erythritol 2-phosphate + ADP + H(+). It functions in the pathway isoprenoid biosynthesis; isopentenyl diphosphate biosynthesis via DXP pathway; isopentenyl diphosphate from 1-deoxy-D-xylulose 5-phosphate: step 3/6. Functionally, catalyzes the phosphorylation of the position 2 hydroxy group of 4-diphosphocytidyl-2C-methyl-D-erythritol. The polypeptide is 4-diphosphocytidyl-2-C-methyl-D-erythritol kinase (Bacteroides thetaiotaomicron (strain ATCC 29148 / DSM 2079 / JCM 5827 / CCUG 10774 / NCTC 10582 / VPI-5482 / E50)).